Reading from the N-terminus, the 115-residue chain is Cholecystokinin (115 aa).

Positions 1-20 (MNSGVCLCVLMAVLAAGALT) are cleaved as a signal peptide. Positions 21-44 (QPVPPADPAGSGLQRAEEAPRRQL) are excised as a propeptide. The disordered stretch occupies residues 23 to 52 (VPPADPAGSGLQRAEEAPRRQLRVSQRTDG). A glycan (O-linked (Xyl...) (chondroitin sulfate) serine) is linked at serine 31. Tyrosine 97 is subject to Sulfotyrosine. Phenylalanine 103 bears the Phenylalanine amide mark. The propeptide occupies 107-115 (SAEEYEYPS). Sulfotyrosine occurs at positions 111 and 113.

This sequence belongs to the gastrin/cholecystokinin family. In terms of assembly, binds to CCK-A receptors in the pancreas and CCK-B receptors in the brain. Post-translationally, the precursor is cleaved by proteases to produce a number of active cholecystokinins. In terms of processing, the precursor is cleaved by ACE, which removes the Gly-Arg-Arg peptide at the C-terminus, leading to mature hormone. In terms of tissue distribution, detected in cerebrospinal fluid and urine (at protein level).

Its subcellular location is the secreted. In terms of biological role, this peptide hormone induces gall bladder contraction and the release of pancreatic enzymes in the gut. Its function in the brain is not clear. Binding to CCK-A receptors stimulates amylase release from the pancreas, binding to CCK-B receptors stimulates gastric acid secretion. This chain is Cholecystokinin (CCK), found in Homo sapiens (Human).